We begin with the raw amino-acid sequence, 331 residues long: MAEADTERRPHIPVLLRPLLAAVAPVEGTWLDGTFGAGGYARGLLEAGADRVIGVDRDPLALEMASGWAGDYGDRLRLVAGTFSQLDSHAGAPLDGVVLDLGVSSMQLDLAERGFSFQKDGPLDMRMSQEGESAADLVNTASEETLADILYHYGEERASRRIARAIVEARAAAPITRTLALAEIVARCLPRPKPGQMHPATRSFQAIRIAVNAEFSELVEGLEAAERALRPGGRLAVVTFHSLEDRIVKRFLQLRSGGEGQGNRYAPETRADAPRFTLPLRRAISPDEAELAENPRARSARLRVGVRTDAPAGKVDPQALGTPLIPKKGRR.

S-adenosyl-L-methionine contacts are provided by residues 38 to 40 (GGY), D56, F83, D100, and Q107. The tract at residues 287–331 (DEAELAENPRARSARLRVGVRTDAPAGKVDPQALGTPLIPKKGRR) is disordered.

This sequence belongs to the methyltransferase superfamily. RsmH family.

It localises to the cytoplasm. The enzyme catalyses cytidine(1402) in 16S rRNA + S-adenosyl-L-methionine = N(4)-methylcytidine(1402) in 16S rRNA + S-adenosyl-L-homocysteine + H(+). Specifically methylates the N4 position of cytidine in position 1402 (C1402) of 16S rRNA. In Cereibacter sphaeroides (strain KD131 / KCTC 12085) (Rhodobacter sphaeroides), this protein is Ribosomal RNA small subunit methyltransferase H.